The primary structure comprises 186 residues: Dihydrofolate reductase (186 aa).

A DHFR domain is found at Lys3–Lys183. NADP(+)-binding positions include Ala9 and Gly15–Asp21. Glu29 to Ser34 contributes to the substrate binding site. Arg53–Thr55 is a binding site for NADP(+). Arg69 is a substrate binding site. NADP(+) contacts are provided by residues Thr75–Asp77 and Gly116–Glu123.

The protein belongs to the dihydrofolate reductase family.

It carries out the reaction (6S)-5,6,7,8-tetrahydrofolate + NADP(+) = 7,8-dihydrofolate + NADPH + H(+). It functions in the pathway cofactor biosynthesis; tetrahydrofolate biosynthesis; 5,6,7,8-tetrahydrofolate from 7,8-dihydrofolate: step 1/1. Its function is as follows. Key enzyme in folate metabolism. Catalyzes an essential reaction for de novo glycine and purine synthesis, and for DNA precursor synthesis. The protein is Dihydrofolate reductase (DHFR) of Aedes albopictus (Asian tiger mosquito).